The chain runs to 113 residues: Ferredoxin-1 (113 aa).

4Fe-4S ferredoxin-type domains lie at 2 to 30 (TYIV…YEGE) and 31 to 60 (NFLV…PDTE). 2 residues coordinate [3Fe-4S] cluster: Cys-9 and Cys-17. [4Fe-4S] cluster contacts are provided by Cys-21, Cys-40, Cys-43, and Cys-46. Cys-50 is a binding site for [3Fe-4S] cluster.

[4Fe-4S] cluster is required as a cofactor. Requires [3Fe-4S] cluster as cofactor.

The chain is Ferredoxin-1 (fdxA) from Caulobacter vibrioides (strain ATCC 19089 / CIP 103742 / CB 15) (Caulobacter crescentus).